The primary structure comprises 146 residues: Large ribosomal subunit protein uL15 (146 aa).

The segment at 1–65 is disordered; that stretch reads MSDIQLNTLK…GQMPLQRRLP (65 aa). Residues 24-34 are compositionally biased toward gly residues; that stretch reads RGIGSGLGKTA.

Belongs to the universal ribosomal protein uL15 family. Part of the 50S ribosomal subunit.

Binds to the 23S rRNA. The polypeptide is Large ribosomal subunit protein uL15 (Bordetella parapertussis (strain 12822 / ATCC BAA-587 / NCTC 13253)).